We begin with the raw amino-acid sequence, 729 residues long: Pentatricopeptide repeat-containing protein At5g01110 (729 aa).

The segment at 26–45 is disordered; it reads TSSSPVFEPSSSSSSSSSSA. Positions 27–45 are enriched in low complexity; that stretch reads SSSPVFEPSSSSSSSSSSA. PPR repeat units follow at residues 112–147, 164–198, 199–233, 234–268, 269–303, 304–338, 339–373, 374–408, 409–443, 444–478, 479–513, 514–548, 549–583, 584–618, 619–649, 656–690, and 691–725; these read TSLSLSAMIHILVRSGRLSDAQSCLLRMIRRSGVSR, NDSVFDLLIRTYVQARKLREAHEAFTLLRSKGFTV, SIDACNALIGSLVRIGWVELAWGVYQEISRSGVGI, NVYTLNIMVNALCKDGKMEKVGTFLSQVQEKGVYP, DIVTYNTLISAYSSKGLMEEAFELMNAMPGKGFSP, GVYTYNTVINGLCKHGKYERAKEVFAEMLRSGLSP, DSTTYRSLLMEACKKGDVVETEKVFSDMRSRDVVP, DLVCFSSMMSLFTRSGNLDKALMYFNSVKEAGLIP, DNVIYTILIQGYCRKGMISVAMNLRNEMLQQGCAM, DVVTYNTILHGLCKRKMLGEADKLFNEMTERALFP, DSYTLTILIDGHCKLGNLQNAMELFQKMKEKRIRL, DVVTYNTLLDGFGKVGDIDTAKEIWADMVSKEILP, TPISYSILVNALCSKGHLAEAFRVWDEMISKNIKP, TVMICNSMIKGYCRSGNASDGESFLEKMISEGFVP, DCISYNTLIYGFVREENMSKAFGLVKKMEEE, DVFTYNSILHGFCRQNQMKEAEVVLRKMIERGVNP, and DRSTYTCMINGFVSQDNLTEAFRIHDEMLQRGFSP.

Belongs to the PPR family. P subfamily.

In Arabidopsis thaliana (Mouse-ear cress), this protein is Pentatricopeptide repeat-containing protein At5g01110.